A 65-amino-acid polypeptide reads, in one-letter code: uncharacterized protein (65 aa).

Transmembrane regions (helical) follow at residues 12-31 and 41-63; these read IVKW…LIVV and LVAR…AIIV.

The protein localises to the cell membrane. This is an uncharacterized protein from Halalkalibacterium halodurans (strain ATCC BAA-125 / DSM 18197 / FERM 7344 / JCM 9153 / C-125) (Bacillus halodurans).